A 297-amino-acid polypeptide reads, in one-letter code: Pantothenate synthetase (297 aa).

30–37 (MGYLHAGH) is a binding site for ATP. His-37 serves as the catalytic Proton donor. Gln-61 is a binding site for (R)-pantoate. Gln-61 contacts beta-alanine. 147 to 150 (GEKD) contributes to the ATP binding site. Gln-153 contacts (R)-pantoate. ATP contacts are provided by residues Val-176 and 184 to 187 (LSSR).

The protein belongs to the pantothenate synthetase family. In terms of assembly, homodimer.

Its subcellular location is the cytoplasm. The catalysed reaction is (R)-pantoate + beta-alanine + ATP = (R)-pantothenate + AMP + diphosphate + H(+). Its pathway is cofactor biosynthesis; (R)-pantothenate biosynthesis; (R)-pantothenate from (R)-pantoate and beta-alanine: step 1/1. Its function is as follows. Catalyzes the condensation of pantoate with beta-alanine in an ATP-dependent reaction via a pantoyl-adenylate intermediate. The polypeptide is Pantothenate synthetase (Rhizobium etli (strain ATCC 51251 / DSM 11541 / JCM 21823 / NBRC 15573 / CFN 42)).